The primary structure comprises 277 residues: MTPQIDRYAVFGNPIGHSKSPFIHTLFARQTNQSLTYTAECAPVGGFIEAAKAFFADGGKGCNVTLPFKEDAYQFASRLTERAQLAGAVNTLKKLDDGEIIGDNTDGAGLVQDLLQHQVVLEGARILIIGAGGAARGVIKPLLDQKPTSLTITNRTFSKAEELAELFSVYGPVTAKEMNIVAEEFDIIINSTSASLSGELPAISSSVFAANSTSYDMMYGKGDTTFNQWAKQHGAAHAYDGLGMLVGQAAESFMLWRGLRPGAKQILRELRKNLEGQ.

Residues 18–20 (SKS) and Thr65 contribute to the shikimate site. Lys69 serves as the catalytic Proton acceptor. Residue Glu81 participates in NADP(+) binding. Asn90 and Asp106 together coordinate shikimate. NADP(+) is bound by residues 130–134 (GAGGA), 154–159 (NRTFSK), and Met217. Tyr219 contributes to the shikimate binding site. Gly241 lines the NADP(+) pocket.

The protein belongs to the shikimate dehydrogenase family. In terms of assembly, homodimer.

The catalysed reaction is shikimate + NADP(+) = 3-dehydroshikimate + NADPH + H(+). It participates in metabolic intermediate biosynthesis; chorismate biosynthesis; chorismate from D-erythrose 4-phosphate and phosphoenolpyruvate: step 4/7. Functionally, involved in the biosynthesis of the chorismate, which leads to the biosynthesis of aromatic amino acids. Catalyzes the reversible NADPH linked reduction of 3-dehydroshikimate (DHSA) to yield shikimate (SA). The protein is Shikimate dehydrogenase (NADP(+)) of Vibrio parahaemolyticus serotype O3:K6 (strain RIMD 2210633).